A 421-amino-acid polypeptide reads, in one-letter code: Gamma-glutamyl phosphate reductase (421 aa).

Belongs to the gamma-glutamyl phosphate reductase family.

Its subcellular location is the cytoplasm. The catalysed reaction is L-glutamate 5-semialdehyde + phosphate + NADP(+) = L-glutamyl 5-phosphate + NADPH + H(+). The protein operates within amino-acid biosynthesis; L-proline biosynthesis; L-glutamate 5-semialdehyde from L-glutamate: step 2/2. Its function is as follows. Catalyzes the NADPH-dependent reduction of L-glutamate 5-phosphate into L-glutamate 5-semialdehyde and phosphate. The product spontaneously undergoes cyclization to form 1-pyrroline-5-carboxylate. This chain is Gamma-glutamyl phosphate reductase, found in Pseudomonas fluorescens (strain ATCC BAA-477 / NRRL B-23932 / Pf-5).